A 399-amino-acid chain; its full sequence is MPQLSGGGGGGGGDPELCATDEMIPFKDEGDPQKEKIFAEISHPEEEGDLADIKSSLVNESEIIPASNGHEVARQAQTSQEPYHDKAREHPDDGKHPDGGLYNKGPSYSSYSGYIMMPNMNNDPYMSNGSLSPPIPRTSNKVPVVQPSHAVHPLTPLITYSDEHFSPGSHPSHIPSDVNSKQGMSRHPPAPDIPTFYPLSPGGVGQITPPLGWQGQPVYPITGGFRQPYPSSLSVDTSMSRFSHHMIPGPPGPHTTGIPHPAIVTPQVKQEHPHTDSDLMHVKPQHEQRKEQEPKRPHIKKPLNAFMLYMKEMRANVVAECTLKESAAINQILGRRWHALSREEQAKYYELARKERQLHMQLYPGWSARDNYGKKKKRKREKLQESASGTGPRMTAAYI.

Gly residues predominate over residues methionine 1–aspartate 14. The interval methionine 1–glutamate 62 is CTNNB1-binding. The segment at methionine 1–lysine 104 is disordered. 2 stretches are compositionally biased toward basic and acidic residues: residues isoleucine 24–glutamate 45 and proline 82–aspartate 98. Lysine 27 participates in a covalent cross-link: Glycyl lysine isopeptide (Lys-Gly) (interchain with G-Cter in SUMO). Serine 132 carries the phosphoserine modification. Phosphothreonine; by NLK is present on threonine 155. A Phosphoserine; by NLK modification is found at serine 166. Disordered regions lie at residues serine 166–aspartate 192 and valine 268–histidine 298. A Glycyl lysine isopeptide (Lys-Gly) (interchain with G-Cter in SUMO) cross-link involves residue lysine 269. Over residues lysine 269–arginine 296 the composition is skewed to basic and acidic residues. The segment at residues isoleucine 299 to serine 367 is a DNA-binding region (HMG box). The disordered stretch occupies residues arginine 369–isoleucine 399.

It belongs to the TCF/LEF family. Binds the armadillo repeat of CTNNB1 and forms a stable complex. Interacts with EP300, TLE1 and PIASG. Binds ALYREF/THOC4, MDFI and MDFIC. Interacts with NLK. Interacts with DAZAP2. In terms of processing, phosphorylated at Thr-155 and/or Ser-166 by NLK. Phosphorylation by NLK at these sites represses LEF1-mediated transcriptional activation of target genes of the canonical Wnt signaling pathway. As to expression, detected in thymus. Not detected in normal colon, but highly expressed in colon cancer biopsies and colon cancer cell lines. Expressed in several pancreatic tumors and weakly expressed in normal pancreatic tissue. Isoforms 1 and 5 are detected in several pancreatic cell lines.

It is found in the nucleus. In terms of biological role, transcription factor that binds DNA in a sequence-specific manner. Participates in the Wnt signaling pathway. Activates transcription of target genes in the presence of CTNNB1 and EP300. PIAG antagonizes both Wnt-dependent and Wnt-independent activation by LEF1. TLE1, TLE2, TLE3 and TLE4 repress transactivation mediated by LEF1 and CTNNB1. Regulates T-cell receptor alpha enhancer function. Required for IL17A expressing gamma-delta T-cell maturation and development, via binding to regulator loci of BLK to modulate expression. Acts as a positive regulator of odontoblast differentiation during mesenchymal tooth germ formation, expression is repressed during the bell stage by MSX1-mediated inhibition of CTNNB1 signaling. May play a role in hair cell differentiation and follicle morphogenesis. Transcriptionally activates MYC and CCND1 expression and enhances proliferation of pancreatic tumor cells. Functionally, lacks the CTNNB1 interaction domain and may therefore be an antagonist for Wnt signaling. Its function is as follows. Transcriptionally activates the fibronectin promoter, binds to and represses transcription from the E-cadherin promoter in a CTNNB1-independent manner, and is involved in reducing cellular aggregation and increasing cell migration of pancreatic cancer cells. The protein is Lymphoid enhancer-binding factor 1 of Homo sapiens (Human).